Here is a 356-residue protein sequence, read N- to C-terminus: UDP-N-acetylglucosamine--N-acetylmuramyl-(pentapeptide) pyrophosphoryl-undecaprenol N-acetylglucosamine transferase (356 aa).

The UDP-N-acetyl-alpha-D-glucosamine site is built by R166, S196, and Q290.

The protein belongs to the glycosyltransferase 28 family. MurG subfamily.

It is found in the cell membrane. It carries out the reaction Mur2Ac(oyl-L-Ala-gamma-D-Glu-L-Lys-D-Ala-D-Ala)-di-trans,octa-cis-undecaprenyl diphosphate + UDP-N-acetyl-alpha-D-glucosamine = beta-D-GlcNAc-(1-&gt;4)-Mur2Ac(oyl-L-Ala-gamma-D-Glu-L-Lys-D-Ala-D-Ala)-di-trans,octa-cis-undecaprenyl diphosphate + UDP + H(+). It participates in cell wall biogenesis; peptidoglycan biosynthesis. In terms of biological role, cell wall formation. Catalyzes the transfer of a GlcNAc subunit on undecaprenyl-pyrophosphoryl-MurNAc-pentapeptide (lipid intermediate I) to form undecaprenyl-pyrophosphoryl-MurNAc-(pentapeptide)GlcNAc (lipid intermediate II). This is UDP-N-acetylglucosamine--N-acetylmuramyl-(pentapeptide) pyrophosphoryl-undecaprenol N-acetylglucosamine transferase from Staphylococcus aureus (strain bovine RF122 / ET3-1).